The chain runs to 156 residues: MGSLRGLRLVAGSCFRSCERDAFSSLRLTRNSDLKRTNGFCSKPQESPKPPDQHTYSHRVPLHKPTDWEKKILIWSGRFKKEDEIPETVSFEMLDAAKNKVRVKISYVMIALTVAGCVLMVIEGKKAARRNETLTSLNLEKKARLREEAAMKAKTE.

The interval 37–57 (TNGFCSKPQESPKPPDQHTYS) is disordered. The required for proapoptotic activity stretch occupies residues 78–104 (RFKKEDEIPETVSFEMLDAAKNKVRVK). The chain crosses the membrane as a helical span at residues 105–122 (ISYVMIALTVAGCVLMVI).

This sequence belongs to the UPF0389 family. As to quaternary structure, interacts with HSP90AB1; HSP90AB1 is essential for FAM162A mitochondrial localization and pro-apoptotic activity. Interacts with VDAC2; the interaction is probably involved in inducing mitochondrial permeability transition.

Its subcellular location is the mitochondrion membrane. Its function is as follows. Proposed to be involved in regulation of apoptosis; the exact mechanism may differ between cell types/tissues. May be involved in hypoxia-induced cell death of transformed cells implicating cytochrome C release and caspase activation (such as CASP9) and inducing mitochondrial permeability transition. May be involved in hypoxia-induced cell death of neuronal cells probably by promoting release of AIFM1 from mitochondria to cytoplasm and its translocation to the nucleus; however, the involvement of caspases has been reported conflictingly. The protein is Protein FAM162A (FAM162A) of Bos taurus (Bovine).